Here is a 439-residue protein sequence, read N- to C-terminus: Tol-Pal system protein TolB (439 aa).

Positions 1 to 22 are cleaved as a signal peptide; the sequence is MTKFPRWLAMLVGLLFPLSALT.

It belongs to the TolB family. As to quaternary structure, the Tol-Pal system is composed of five core proteins: the inner membrane proteins TolA, TolQ and TolR, the periplasmic protein TolB and the outer membrane protein Pal. They form a network linking the inner and outer membranes and the peptidoglycan layer.

The protein localises to the periplasm. Part of the Tol-Pal system, which plays a role in outer membrane invagination during cell division and is important for maintaining outer membrane integrity. This is Tol-Pal system protein TolB from Xylella fastidiosa (strain 9a5c).